Reading from the N-terminus, the 163-residue chain is Nucleotide-binding protein HDEF_1968 (163 aa).

This sequence belongs to the YajQ family.

Its function is as follows. Nucleotide-binding protein. The chain is Nucleotide-binding protein HDEF_1968 from Hamiltonella defensa subsp. Acyrthosiphon pisum (strain 5AT).